Here is a 520-residue protein sequence, read N- to C-terminus: Signal peptide peptidase-like 2A (520 aa).

The signal sequence occupies residues 1-25; the sequence is MGPQRRLSPAGAALLWGFLLQLTAA. Topologically, residues 26–172 are lumenal; sequence QEAILHASGN…PSWPNFDYTM (147 aa). N-linked (GlcNAc...) asparagine glycosylation is found at asparagine 58, asparagine 66, asparagine 74, asparagine 116, asparagine 126, and asparagine 149. One can recognise a PA domain in the interval 63–151; it reads SLMNLTSTPL…YKDFRDMNQT (89 aa). A glycan (N-linked (GlcNAc...) (complex) asparagine) is linked at asparagine 155. The chain crosses the membrane as a helical span at residues 173–193; sequence VVIFVIAVFTVALGGYWSGLV. Residues 194 to 220 are Cytoplasmic-facing; it reads ELENLKAVTTEDREMRKKKEEYLTFSP. A helical transmembrane segment spans residues 221 to 241; that stretch reads LTVVIFVVICCVMMVLLYFFY. Residues 242–247 lie on the Lumenal side of the membrane; the sequence is KWLVYV. The chain crosses the membrane as a helical span at residues 248-268; the sequence is MIAIFCIASAMSLYNCLAALI. Over 269–285 the chain is Cytoplasmic; sequence HKIPYGQCTIACRGKNM. A helical transmembrane segment spans residues 286 to 306; it reads EVRLIFLSGLCIAVAVVWAVF. Residues 307–311 are Lumenal-facing; the sequence is RNEDR. Residues 312–332 traverse the membrane as a helical segment; the sequence is WAWILQDILGIAFCLNLIKTL. Over 333-340 the chain is Cytoplasmic; that stretch reads KLPNFKSC. The helical transmembrane segment at 341 to 361 threads the bilayer; it reads VILLGLLLLYDVFFVFITPFI. Aspartate 351 is an active-site residue. Residues 362 to 399 are Lumenal-facing; that stretch reads TKNGESIMVELAAGPFGNNEKLPVVIRVPKLIYFSVMS. The helical transmembrane segment at 400-420 threads the bilayer; sequence VCLMPVSILGFGDIIVPGLLI. Aspartate 412 is an active-site residue. The Cytoplasmic portion of the chain corresponds to 421–437; that stretch reads AYCRRFDVQTGSSYIYY. Residues 438-458 traverse the membrane as a helical segment; sequence VSSTVAYAIGMILTFVVLVLM. The Lumenal portion of the chain corresponds to 459–460; the sequence is KK. The chain crosses the membrane as a helical span at residues 461–481; it reads GQPALLYLVPCTLITASVVAW. Positions 463–465 match the PAL motif; sequence PAL. The Cytoplasmic portion of the chain corresponds to 482-520; it reads RRKEMKKFWKGNSYQMMDHLDCATNEENPVISGEQIVQQ. The short motif at 495–498 is the YXXo lysosomal targeting motif element; sequence YQMM.

Belongs to the peptidase A22B family. In terms of assembly, interacts with ITM2B. Glycosylated. As to expression, ubiquitous.

The protein localises to the late endosome membrane. It is found in the lysosome membrane. Its subcellular location is the membrane. Functionally, intramembrane-cleaving aspartic protease (I-CLiP) that cleaves type II membrane signal peptides in the hydrophobic plane of the membrane. Functions in FASLG, ITM2B and TNF processing. Catalyzes the intramembrane cleavage of the anchored fragment of shed TNF-alpha (TNF), which promotes the release of the intracellular domain (ICD) for signaling to the nucleus. Also responsible for the intramembrane cleavage of Fas antigen ligand FASLG, which promotes the release of the intracellular FasL domain (FasL ICD). Essential for degradation of the invariant chain CD74 that plays a central role in the function of antigen-presenting cells in the immune system. Plays a role in the regulation of innate and adaptive immunity. Catalyzes the intramembrane cleavage of the simian foamy virus envelope glycoprotein gp130 independently of prior ectodomain shedding by furin or furin-like proprotein convertase (PC)-mediated cleavage proteolysis. The sequence is that of Signal peptide peptidase-like 2A from Homo sapiens (Human).